Here is a 303-residue protein sequence, read N- to C-terminus: MNKDQTLSHTTGRVSFKELQQIIKMGLVQGNLIPAFAGAWLAIVMTNHSFLSSIPQILLMLVGSTLIMGGACALNNYYDQDIDRIMPSKQSRPTVNDRISDRNLLMLSFGMMLIGEACLFLLNIPSGVLGLIGIVGYVSYYSIWSKRHTTWNTVVGSFPGAVPPLIGWVAIDGSLSLAAVALFLVVFCWQPIHFYALAIKRSDEYALANIPMLPSVKGFKRTRVSMFIWLVLLLPLPFLLSNLGVTFVVIATLLNLGWLALGFTTFRKESNQTKWATQMFVYSLNYLVVFFALVVVVSLIKMI.

6 consecutive transmembrane segments (helical) span residues 25 to 45 (MGLVQGNLIPAFAGAWLAIVM), 54 to 74 (IPQILLMLVGSTLIMGGACAL), 118 to 138 (CLFLLNIPSGVLGLIGIVGYV), 166 to 186 (IGWVAIDGSLSLAAVALFLVV), 230 to 250 (LVLLLPLPFLLSNLGVTFVVI), and 280 to 300 (FVYSLNYLVVFFALVVVVSLI).

The protein belongs to the UbiA prenyltransferase family. Protoheme IX farnesyltransferase subfamily. As to quaternary structure, interacts with CtaA.

Its subcellular location is the cell membrane. The enzyme catalyses heme b + (2E,6E)-farnesyl diphosphate + H2O = Fe(II)-heme o + diphosphate. Its pathway is porphyrin-containing compound metabolism; heme O biosynthesis; heme O from protoheme: step 1/1. In terms of biological role, converts heme B (protoheme IX) to heme O by substitution of the vinyl group on carbon 2 of heme B porphyrin ring with a hydroxyethyl farnesyl side group. This Staphylococcus epidermidis (strain ATCC 35984 / DSM 28319 / BCRC 17069 / CCUG 31568 / BM 3577 / RP62A) protein is Protoheme IX farnesyltransferase.